We begin with the raw amino-acid sequence, 205 residues long: Putative 3-methyladenine DNA glycosylase (205 aa).

It belongs to the DNA glycosylase MPG family.

This is Putative 3-methyladenine DNA glycosylase from Bacillus cereus (strain ATCC 14579 / DSM 31 / CCUG 7414 / JCM 2152 / NBRC 15305 / NCIMB 9373 / NCTC 2599 / NRRL B-3711).